The chain runs to 506 residues: Anaerobic nitric oxide reductase transcription regulator NorR (506 aa).

A 4-aspartylphosphate modification is found at D57. In terms of domain architecture, Sigma-54 factor interaction spans 187–416 (MIGLSPAMTQ…LEHAIHRAVV (230 aa)). ATP is bound by residues 215–222 (GETGTGKE) and 278–287 (ADNGTLFLDE). A DNA-binding region (H-T-H motif) is located at residues 481-500 (WAASARALETDVANLHRLAK).

It participates in nitrogen metabolism; nitric oxide reduction. Its function is as follows. Required for the expression of anaerobic nitric oxide (NO) reductase, acts as a transcriptional activator for at least the norVW operon. Activation also requires sigma-54. The protein is Anaerobic nitric oxide reductase transcription regulator NorR of Salmonella dublin (strain CT_02021853).